Reading from the N-terminus, the 393-residue chain is MSENRAPIYLDNNATTRTDPSVVQTMLPFFTEQFGNASSAHAFGNEAAIAVRQARRSLSGLLGSAYDHEIVFTSGGTEANNAAILSALATQEGRDEVVTTSVEHSAVLALTEQLAARGVKTRIIAVDACGRLDIEAFRCALGPRTAIASVMWANNETGTIFPVKCLAGWTREAGALFHTDAVQAIGKVRLNLKDSTIDMLSLSAHKLHGPKGVGALYLRKGTKFQPLICGGSQERGRRAGTENIPGIVGLGKAAELAAERLEPERIRIGALRDRLEQGILRNGECVVLGDIRNRLANTTNIAFDHLEGEAIAHRLNRAGIAVSLGSACRSGSMQPSHVLRAMQVPAWRMHGAVRFSLSRETSLAEVDEAVCAVSDIVTRMRASSRATVREQTS.

Pyridoxal 5'-phosphate-binding positions include 76-77, asparagine 155, glutamine 183, and 203-205; these read GT and SAH. At lysine 206 the chain carries N6-(pyridoxal phosphate)lysine. Threonine 241 is a binding site for pyridoxal 5'-phosphate. The active-site Cysteine persulfide intermediate is the cysteine 328. Position 328 (cysteine 328) interacts with [2Fe-2S] cluster.

It belongs to the class-V pyridoxal-phosphate-dependent aminotransferase family. NifS/IscS subfamily. Homodimer. It depends on pyridoxal 5'-phosphate as a cofactor.

It carries out the reaction (sulfur carrier)-H + L-cysteine = (sulfur carrier)-SH + L-alanine. Its function is as follows. Catalyzes the removal of elemental sulfur atoms from cysteine to produce alanine. Seems to participate in the biosynthesis of the nitrogenase metalloclusters by providing the inorganic sulfur required for the Fe-S core formation. This is Cysteine desulfurase from Bradyrhizobium diazoefficiens (strain JCM 10833 / BCRC 13528 / IAM 13628 / NBRC 14792 / USDA 110).